The sequence spans 157 residues: Serine-protein kinase RsbW (157 aa).

The protein belongs to the anti-sigma-factor family.

The enzyme catalyses L-seryl-[protein] + ATP = O-phospho-L-seryl-[protein] + ADP + H(+). It catalyses the reaction L-threonyl-[protein] + ATP = O-phospho-L-threonyl-[protein] + ADP + H(+). Negative regulator of sigma-B activity. Phosphorylates and inactivates its specific antagonist protein, RsbV. Upon phosphorylation of RsbV, RsbW is released and binds to sigma-B, thereby blocking its ability to form an RNA polymerase holoenzyme (E-sigma-B). This is Serine-protein kinase RsbW from Listeria monocytogenes serovar 1/2a (strain ATCC BAA-679 / EGD-e).